The sequence spans 367 residues: tRNA 2-selenouridine synthase (367 aa).

In terms of domain architecture, Rhodanese spans 14-137 (FLNDVPLMDV…LRRFLIDSLE (124 aa)). Cys97 acts as the S-selanylcysteine intermediate in catalysis.

The protein belongs to the SelU family. Monomer.

The enzyme catalyses 5-methylaminomethyl-2-thiouridine(34) in tRNA + selenophosphate + (2E)-geranyl diphosphate + H2O + H(+) = 5-methylaminomethyl-2-selenouridine(34) in tRNA + (2E)-thiogeraniol + phosphate + diphosphate. It carries out the reaction 5-methylaminomethyl-2-thiouridine(34) in tRNA + (2E)-geranyl diphosphate = 5-methylaminomethyl-S-(2E)-geranyl-thiouridine(34) in tRNA + diphosphate. It catalyses the reaction 5-methylaminomethyl-S-(2E)-geranyl-thiouridine(34) in tRNA + selenophosphate + H(+) = 5-methylaminomethyl-2-(Se-phospho)selenouridine(34) in tRNA + (2E)-thiogeraniol. The catalysed reaction is 5-methylaminomethyl-2-(Se-phospho)selenouridine(34) in tRNA + H2O = 5-methylaminomethyl-2-selenouridine(34) in tRNA + phosphate. Involved in the post-transcriptional modification of the uridine at the wobble position (U34) of tRNA(Lys), tRNA(Glu) and tRNA(Gln). Catalyzes the conversion of 2-thiouridine (S2U-RNA) to 2-selenouridine (Se2U-RNA). Acts in a two-step process involving geranylation of 2-thiouridine (S2U) to S-geranyl-2-thiouridine (geS2U) and subsequent selenation of the latter derivative to 2-selenouridine (Se2U) in the tRNA chain. This chain is tRNA 2-selenouridine synthase, found in Marinobacter nauticus (strain ATCC 700491 / DSM 11845 / VT8) (Marinobacter aquaeolei).